Reading from the N-terminus, the 93-residue chain is Exodeoxyribonuclease 7 small subunit (93 aa).

Positions 61 to 75 (IDDNGDEKVYEKQTD) are enriched in basic and acidic residues. Residues 61-93 (IDDNGDEKVYEKQTDDPSNNGGGNRGFGSADEQ) are disordered.

The protein belongs to the XseB family. Heterooligomer composed of large and small subunits.

The protein resides in the cytoplasm. It catalyses the reaction Exonucleolytic cleavage in either 5'- to 3'- or 3'- to 5'-direction to yield nucleoside 5'-phosphates.. Functionally, bidirectionally degrades single-stranded DNA into large acid-insoluble oligonucleotides, which are then degraded further into small acid-soluble oligonucleotides. This chain is Exodeoxyribonuclease 7 small subunit, found in Limosilactobacillus reuteri (strain DSM 20016) (Lactobacillus reuteri).